The sequence spans 392 residues: DNA replication and repair protein RecF (392 aa).

An ATP-binding site is contributed by 30 to 37 (GRNGFGKT).

Belongs to the RecF family.

It is found in the cytoplasm. Functionally, the RecF protein is involved in DNA metabolism; it is required for DNA replication and normal SOS inducibility. RecF binds preferentially to single-stranded, linear DNA. It also seems to bind ATP. The polypeptide is DNA replication and repair protein RecF (Corynebacterium aurimucosum (strain ATCC 700975 / DSM 44827 / CIP 107346 / CN-1) (Corynebacterium nigricans)).